Here is a 261-residue protein sequence, read N- to C-terminus: Phosphate import ATP-binding protein PstB (261 aa).

The ABC transporter domain maps to 15-256 (LQVRRLNFYY…PAHQETENYI (242 aa)). 47–54 (GPSGCGKS) contributes to the ATP binding site.

Belongs to the ABC transporter superfamily. Phosphate importer (TC 3.A.1.7) family. As to quaternary structure, the complex is composed of two ATP-binding proteins (PstB), two transmembrane proteins (PstC and PstA) and a solute-binding protein (PstS).

The protein resides in the cell inner membrane. The catalysed reaction is phosphate(out) + ATP + H2O = ADP + 2 phosphate(in) + H(+). In terms of biological role, part of the ABC transporter complex PstSACB involved in phosphate import. Responsible for energy coupling to the transport system. This Burkholderia sp protein is Phosphate import ATP-binding protein PstB.